The sequence spans 130 residues: Fluoride-specific ion channel FluC (130 aa).

4 helical membrane-spanning segments follow: residues 3-23 (FVFL…YFVG), 39-59 (GTFS…HLAV), 67-87 (FGIF…SYGL), and 102-122 (ISYV…GWFL). Na(+) contacts are provided by G77 and T80.

It belongs to the fluoride channel Fluc/FEX (TC 1.A.43) family.

The protein resides in the cell inner membrane. It catalyses the reaction fluoride(in) = fluoride(out). Its activity is regulated as follows. Na(+) is not transported, but it plays an essential structural role and its presence is essential for fluoride channel function. Its function is as follows. Fluoride-specific ion channel. Important for reducing fluoride concentration in the cell, thus reducing its toxicity. This Helicobacter pylori (strain P12) protein is Fluoride-specific ion channel FluC.